We begin with the raw amino-acid sequence, 155 residues long: Ciliary microtubule inner protein 2C (155 aa).

The protein belongs to the CIMIP2 family.

The protein resides in the cytoplasm. Its subcellular location is the cytoskeleton. The protein localises to the cilium axoneme. Its function is as follows. Microtubule inner protein (MIP) part of the dynein-decorated doublet microtubules (DMTs) in cilia axoneme, which is required for motile cilia beating. This Xenopus laevis (African clawed frog) protein is Ciliary microtubule inner protein 2C (cimip2cb).